The chain runs to 184 residues: Gremlin-1 (184 aa).

An N-terminal signal peptide occupies residues 1 to 24; it reads MNRTAYTVGALLLLLGTLLPTAEG. The segment at 23-77 is disordered; that stretch reads EGKKKGSQGAIPPPDKAQHNDSEQTQSPPQPGSRTRGRGQGRGTAMPGEEVLESS. The N-linked (GlcNAc...) asparagine glycan is linked to asparagine 42. Cystine bridges form between cysteine 94–cysteine 144, cysteine 108–cysteine 158, cysteine 118–cysteine 176, and cysteine 122–cysteine 178. The region spanning 94–184 is the CTCK domain; it reads CKTQPLKQTI…QCRCISIDLD (91 aa).

The protein belongs to the DAN family. In terms of assembly, homodimer; can also form homooligomers. Interacts with BMP2; can form higher oligomers with BMP2. Interacts with SLIT1 and SLIT2 in a glycosylation-dependent manner. Highly expressed in spleen and to a lesser extent in lung, skeletal muscle and kidney. Expressed only in non-transformed cells or primary fibroblasts in culture but not in established transformed or tumor derived cell lines. Broadly expressed in limb bud mesenchyme but restricted to the distal limb bud mesenchyme and concentrated posteriorly. Expressed in ovary especially in granulosa cells of follicles of type 4.

It is found in the secreted. Functionally, cytokine that may play an important role during carcinogenesis and metanephric kidney organogenesis, as BMP a antagonist required for early limb outgrowth and patterning in maintaining the FGF4-SHH feedback loop. Down-regulates the BMP4 signaling in a dose-dependent manner. Antagonist of BMP2; inhibits BMP2-mediated differentiation of osteoblasts (in vitro). Acts as inhibitor of monocyte chemotaxis. The chain is Gremlin-1 (Grem1) from Mus musculus (Mouse).